Reading from the N-terminus, the 361-residue chain is Phospho-N-acetylmuramoyl-pentapeptide-transferase (361 aa).

10 helical membrane passes run 28–48 (LAII…IKFL), 74–94 (TMGG…LADL), 99–119 (IWIT…DDYA), 133–153 (SKLL…EYTD), 168–188 (LSLD…VGSS), 203–223 (VPIA…GNLI), 236–256 (TGEL…FLWF), 263–283 (VFMG…ISVI), 288–308 (VVLS…ILQV), and 338–358 (KVVI…LSSL).

The protein belongs to the glycosyltransferase 4 family. MraY subfamily. Requires Mg(2+) as cofactor.

The protein localises to the cell inner membrane. The enzyme catalyses UDP-N-acetyl-alpha-D-muramoyl-L-alanyl-gamma-D-glutamyl-meso-2,6-diaminopimeloyl-D-alanyl-D-alanine + di-trans,octa-cis-undecaprenyl phosphate = di-trans,octa-cis-undecaprenyl diphospho-N-acetyl-alpha-D-muramoyl-L-alanyl-D-glutamyl-meso-2,6-diaminopimeloyl-D-alanyl-D-alanine + UMP. It participates in cell wall biogenesis; peptidoglycan biosynthesis. Catalyzes the initial step of the lipid cycle reactions in the biosynthesis of the cell wall peptidoglycan: transfers peptidoglycan precursor phospho-MurNAc-pentapeptide from UDP-MurNAc-pentapeptide onto the lipid carrier undecaprenyl phosphate, yielding undecaprenyl-pyrophosphoryl-MurNAc-pentapeptide, known as lipid I. The sequence is that of Phospho-N-acetylmuramoyl-pentapeptide-transferase from Rickettsia canadensis (strain McKiel).